The primary structure comprises 243 residues: Zinc import ATP-binding protein ZnuC (243 aa).

Residues 4–219 (ITVENLSVRY…PEYRALFGTG (216 aa)) form the ABC transporter domain. Position 36-43 (36-43 (GPNGSGKT)) interacts with ATP.

Belongs to the ABC transporter superfamily. Zinc importer (TC 3.A.1.15.5) family. The complex is composed of two ATP-binding proteins (ZnuC), two transmembrane proteins (ZnuB) and a solute-binding protein (ZnuA).

The protein resides in the cell inner membrane. It catalyses the reaction Zn(2+)(out) + ATP(in) + H2O(in) = Zn(2+)(in) + ADP(in) + phosphate(in) + H(+)(in). Its function is as follows. Part of the ABC transporter complex ZnuABC involved in zinc import. Responsible for energy coupling to the transport system. This chain is Zinc import ATP-binding protein ZnuC, found in Jannaschia sp. (strain CCS1).